A 739-amino-acid chain; its full sequence is Endoglucanase F (739 aa).

An N-terminal signal peptide occupies residues 1-27; sequence MKKILAFLLTVALVAVVAIPQAVVSFA. The interval 28 to 470 is catalytic; that stretch reads ADFNYGEALQ…AKMYEKYGGE (443 aa). Asp84 (nucleophile) is an active-site residue. Catalysis depends on residues His400, Asp438, and Glu447. One can recognise a CBM3 domain in the interval 480–639; that stretch reads TPGEEFYVEA…NVRVWGKVPD (160 aa). In terms of domain architecture, Dockerin spans 664 to 737; sequence PGIMLGDVNF…ILKLIEKFPA (74 aa).

It belongs to the glycosyl hydrolase 9 (cellulase E) family. Requires Ca(2+) as cofactor.

The catalysed reaction is Endohydrolysis of (1-&gt;4)-beta-D-glucosidic linkages in cellulose, lichenin and cereal beta-D-glucans.. This enzyme catalyzes the endohydrolysis of 1,4-beta-glucosidic linkages in cellulose, lichenin and cereal beta-D-glucans. This chain is Endoglucanase F (celF), found in Acetivibrio thermocellus (strain ATCC 27405 / DSM 1237 / JCM 9322 / NBRC 103400 / NCIMB 10682 / NRRL B-4536 / VPI 7372) (Clostridium thermocellum).